We begin with the raw amino-acid sequence, 237 residues long: C-type lectin domain family 4 member A (237 aa).

Residues 1–48 lie on the Cytoplasmic side of the membrane; the sequence is MTSEITYAEVRFKNEFKSSGINTASSAASKERTAPHKSNTGFPKLLCA. Positions 5–10 match the ITIM motif motif; it reads ITYAEV. Residues 49-69 form a helical; Signal-anchor for type II membrane protein membrane-spanning segment; that stretch reads SLLIFFLLLAISFFIAFVIFF. Residues 70–237 are Extracellular-facing; it reads QKYSQLLEKK…SVCEMMKIHL (168 aa). 3 cysteine pairs are disulfide-bonded: C106-C117, C134-C230, and C203-C222. The region spanning 113–231 is the C-type lectin domain; the sequence is FSSNCYFIST…CLGPQRSVCE (119 aa). Residues V143, N145, and E149 each coordinate Ca(2+). N-linked (GlcNAc...) asparagine glycosylation occurs at N185. The Ca(2+) site is built by E195, S197, and E201. Alpha-D-mannopyranose is bound by residues 195-197 and E201; that span reads EPS. Residue 207 to 209 participates in N-acetyl-D-glucosamine binding; the sequence is NFR. Residues N218, D219, and E231 each coordinate Ca(2+).

May interact with PTPN6 via its ITIM motif. In terms of tissue distribution, expressed preferentially in hematopoietic tissues. Expressed in all circulating Ag-presenting cells such as dendritic cells, myeloid cells, monocytes, macrophages, B-cells and epidermal Langerhans cells (at protein level). Expressed in peripheral blood leukocytes, neutrophils, moderate quantities in spleen, lymph node, and bone marrow, and at very low levels in thymus.

The protein localises to the cell membrane. C-type lectin receptor that binds carbohydrates mannose and fucose but also weakly interacts with N-acetylglucosamine (GlcNAc) in a Ca(2+)-dependent manner. Involved in regulating immune reactivity. Once triggered by antigen, it is internalized by clathrin-dependent endocytosis and delivers its antigenic cargo into the antigen presentation pathway resulting in cross-priming of CD8(+) T cells. This cross-presentation and cross-priming are enhanced by TLR7 and TLR8 agonists with increased expansion of the CD8(+) T cells, high production of IFNG and TNF with reduced levels of IL4, IL5 and IL13. In plasmacytoid dendritic cells, inhibits TLR9-mediated IFNA and TNF production. May be involved via its ITIM motif (immunoreceptor tyrosine-based inhibitory motifs) in the inhibition of B-cell-receptor-mediated calcium mobilization and protein tyrosine phosphorylation. In terms of biological role, (Microbial infection) Involved in the interaction between HIV-1 virus and dendritic cells. Enhances HIV-1 binding/entry and virus infection. Requires ITIM motif-associated signal transduction pathway involving phosphatases PTPN6 and PTPN11, SYK, Src kinases and MAP kinases. In Homo sapiens (Human), this protein is C-type lectin domain family 4 member A.